Here is a 236-residue protein sequence, read N- to C-terminus: 2,3,4,5-tetrahydropyridine-2,6-dicarboxylate N-acetyltransferase (236 aa).

The protein belongs to the transferase hexapeptide repeat family. DapH subfamily.

It carries out the reaction (S)-2,3,4,5-tetrahydrodipicolinate + acetyl-CoA + H2O = L-2-acetamido-6-oxoheptanedioate + CoA. It participates in amino-acid biosynthesis; L-lysine biosynthesis via DAP pathway; LL-2,6-diaminopimelate from (S)-tetrahydrodipicolinate (acetylase route): step 1/3. In terms of biological role, catalyzes the transfer of an acetyl group from acetyl-CoA to tetrahydrodipicolinate. The chain is 2,3,4,5-tetrahydropyridine-2,6-dicarboxylate N-acetyltransferase from Clostridium botulinum (strain Eklund 17B / Type B).